The chain runs to 257 residues: MGDDFLAIFKTRAIIIKTQDIKESDKLVWLFTEKLGKISTIAKGSKKSRSPLFSTTLQFCYGDYVVYKGKSLYVINESSLIDSFQHLLNDLNDLTYASYFCELTDIAMDDGESSRELFRYLATSFYLIRSHAVDIETLARTFELKILKTTGYGLNFDYCALCRKKITSFEYLHLQYLGGICRECDKENSMHISYSTCSALKYLSSISMENVYKVVLTKEVKEELYKVLTLIISQNYFRKPKSLDILRNLISFEKNKV.

The protein belongs to the RecO family.

In terms of biological role, involved in DNA repair and RecF pathway recombination. This is DNA repair protein RecO from Clostridium kluyveri (strain ATCC 8527 / DSM 555 / NBRC 12016 / NCIMB 10680 / K1).